The primary structure comprises 709 residues: Septu protein PtuA (709 aa).

Component of antiviral defense system Septu type II, composed of PtuA and PtuB. Expression of Septu type II in B.subtilis (strain BEST7003) confers resistance to phages SBSphiC and SpBeta. May be an ATPase. In Bacillus mycoides (strain KBAB4) (Bacillus weihenstephanensis), this protein is Septu protein PtuA.